Here is a 263-residue protein sequence, read N- to C-terminus: Probable ABC transporter permease protein ycf63 (263 aa).

6 helical membrane passes run 43–63 (LVGP…SMVF), 82–102 (AVIV…VIIA), 136–156 (LVFP…TISL), 159–179 (SIAI…SIFL), 199–219 (LCFG…SSGG), and 230–250 (SVVT…YFMF).

It belongs to the MlaE permease family.

It is found in the plastid. The protein localises to the chloroplast membrane. Could be part of an ABC transporter complex. The chain is Probable ABC transporter permease protein ycf63 (ycf63) from Porphyra purpurea (Red seaweed).